Reading from the N-terminus, the 48-residue chain is Protein YodE (48 aa).

This chain is Protein YodE, found in Escherichia coli (strain K12).